The primary structure comprises 722 residues: Polyribonucleotide nucleotidyltransferase (722 aa).

Mg(2+) contacts are provided by Asp495 and Asp501. The region spanning 562-621 is the KH domain; it reads PRLLSFRIDPELIGTVIGPGGRTIKGITERTNTKIDIEDGGIVTIASHDGVAAEEAQKII. One can recognise an S1 motif domain in the interval 631-699; the sequence is GEVFTGSITR…NRGRINLTLR (69 aa).

Belongs to the polyribonucleotide nucleotidyltransferase family. The cofactor is Mg(2+).

It is found in the cytoplasm. It catalyses the reaction RNA(n+1) + phosphate = RNA(n) + a ribonucleoside 5'-diphosphate. In terms of biological role, involved in mRNA degradation. Catalyzes the phosphorolysis of single-stranded polyribonucleotides processively in the 3'- to 5'-direction. The sequence is that of Polyribonucleotide nucleotidyltransferase from Prochlorococcus marinus (strain SARG / CCMP1375 / SS120).